The primary structure comprises 228 residues: ATP-dependent dethiobiotin synthetase BioD (228 aa).

Position 14-19 (14-19) interacts with ATP; that stretch reads DAGKTL. Residue T18 coordinates Mg(2+). K39 is a catalytic residue. Residues D56, 117-120, and 206-208 each bind ATP; these read EGAG and PRL. Residues D56 and E117 each coordinate Mg(2+).

Belongs to the dethiobiotin synthetase family. As to quaternary structure, homodimer. Requires Mg(2+) as cofactor.

It localises to the cytoplasm. It catalyses the reaction (7R,8S)-7,8-diammoniononanoate + CO2 + ATP = (4R,5S)-dethiobiotin + ADP + phosphate + 3 H(+). It participates in cofactor biosynthesis; biotin biosynthesis; biotin from 7,8-diaminononanoate: step 1/2. Catalyzes a mechanistically unusual reaction, the ATP-dependent insertion of CO2 between the N7 and N8 nitrogen atoms of 7,8-diaminopelargonic acid (DAPA, also called 7,8-diammoniononanoate) to form a ureido ring. This chain is ATP-dependent dethiobiotin synthetase BioD, found in Cellvibrio japonicus (strain Ueda107) (Pseudomonas fluorescens subsp. cellulosa).